The sequence spans 680 residues: Dihydroxyacetone phosphate acyltransferase (680 aa).

2 positions are modified to phosphoserine: serine 12 and serine 17. The short motif at 162–167 (HRSYID) is the HXXXXD motif element. Lysine 643 carries the post-translational modification N6-acetyllysine. The short motif at 678–680 (AKL) is the Microbody targeting signal element.

This sequence belongs to the GPAT/DAPAT family. As to quaternary structure, part of a heterotrimeric complex composed of GNPAT, AGPS and a modified form of GNPAT.

The protein resides in the peroxisome membrane. It catalyses the reaction dihydroxyacetone phosphate + an acyl-CoA = a 1-acylglycerone 3-phosphate + CoA. The catalysed reaction is dihydroxyacetone phosphate + hexadecanoyl-CoA = 1-hexadecanoylglycerone 3-phosphate + CoA. It functions in the pathway membrane lipid metabolism; glycerophospholipid metabolism. Its function is as follows. Dihydroxyacetonephosphate acyltransferase catalyzing the first step in the biosynthesis of plasmalogens, a subset of phospholipids that differ from other glycerolipids by having an alkyl chain attached through a vinyl ether linkage at the sn-1 position of the glycerol backbone, and which unique physical properties have an impact on various aspects of cell signaling and membrane biology. This chain is Dihydroxyacetone phosphate acyltransferase, found in Bos taurus (Bovine).